The sequence spans 360 residues: Photosystem II protein D1 (360 aa).

Transmembrane regions (helical) follow at residues 29 to 46, 118 to 133, and 142 to 156; these read YIGWFGVLMIPTLLTATT, HFLLGVCGWIGREWEF, and WISVAFTAPVAAASA. Position 118 (His118) interacts with chlorophyll a. Trp126 is a pheophytin a binding site. [CaMn4O5] cluster is bound by residues Asp170 and Glu189. Residues 197-218 traverse the membrane as a helical segment; the sequence is FHQLGVAGVFGGSLFSAMHGSL. Residue His198 coordinates chlorophyll a. A quinone is bound by residues His215 and 264–265; that span reads SF. His215 serves as a coordination point for Fe cation. His272 provides a ligand contact to Fe cation. Residues 274–288 traverse the membrane as a helical segment; it reads FLGLWPVVGIWFTAL. Residues His332, Glu333, Asp342, and Ala344 each contribute to the [CaMn4O5] cluster site. A propeptide spanning residues 345–360 is cleaved from the precursor; that stretch reads AGESLPVALTAPAVNG.

Belongs to the reaction center PufL/M/PsbA/D family. As to quaternary structure, PSII is composed of 1 copy each of membrane proteins PsbA, PsbB, PsbC, PsbD, PsbE, PsbF, PsbH, PsbI, PsbJ, PsbK, PsbL, PsbM, PsbT, PsbX, PsbY, PsbZ, Psb30/Ycf12, at least 3 peripheral proteins of the oxygen-evolving complex and a large number of cofactors. It forms dimeric complexes. The D1/D2 heterodimer binds P680, chlorophylls that are the primary electron donor of PSII, and subsequent electron acceptors. It shares a non-heme iron and each subunit binds pheophytin, quinone, additional chlorophylls, carotenoids and lipids. D1 provides most of the ligands for the Mn4-Ca-O5 cluster of the oxygen-evolving complex (OEC). There is also a Cl(-1) ion associated with D1 and D2, which is required for oxygen evolution. The PSII complex binds additional chlorophylls, carotenoids and specific lipids. is required as a cofactor. In terms of processing, tyr-161 forms a radical intermediate that is referred to as redox-active TyrZ, YZ or Y-Z. Post-translationally, C-terminally processed by CTPA; processing is essential to allow assembly of the oxygen-evolving complex and thus photosynthetic growth.

The protein resides in the plastid. Its subcellular location is the chloroplast thylakoid membrane. It catalyses the reaction 2 a plastoquinone + 4 hnu + 2 H2O = 2 a plastoquinol + O2. Functionally, photosystem II (PSII) is a light-driven water:plastoquinone oxidoreductase that uses light energy to abstract electrons from H(2)O, generating O(2) and a proton gradient subsequently used for ATP formation. It consists of a core antenna complex that captures photons, and an electron transfer chain that converts photonic excitation into a charge separation. The D1/D2 (PsbA/PsbD) reaction center heterodimer binds P680, the primary electron donor of PSII as well as several subsequent electron acceptors. This is Photosystem II protein D1 from Rhodomonas salina (Cryptomonas salina).